Consider the following 159-residue polypeptide: Antitoxin Xre (159 aa).

Belongs to the MbcA/ParS/Xre antitoxin family. In terms of assembly, homodimer. Forms a complex with cognate toxin Res; the 2 toxin molecules dimerize and each contacts an Xre homodimer. Most Res-Xre contacts are between the antitoxin molecule closest to the toxin.

Functionally, probable antitoxin component of a type II toxin-antitoxin (TA) system. In vivo probably neutralizes the toxic effect of cognate toxin Res. In Pseudomonas putida (strain ATCC 47054 / DSM 6125 / CFBP 8728 / NCIMB 11950 / KT2440), this protein is Antitoxin Xre.